The primary structure comprises 284 residues: Bifunctional protein FolD (284 aa).

NADP(+)-binding positions include G166 to S168 and I232.

Belongs to the tetrahydrofolate dehydrogenase/cyclohydrolase family. Homodimer.

The catalysed reaction is (6R)-5,10-methylene-5,6,7,8-tetrahydrofolate + NADP(+) = (6R)-5,10-methenyltetrahydrofolate + NADPH. It catalyses the reaction (6R)-5,10-methenyltetrahydrofolate + H2O = (6R)-10-formyltetrahydrofolate + H(+). The protein operates within one-carbon metabolism; tetrahydrofolate interconversion. In terms of biological role, catalyzes the oxidation of 5,10-methylenetetrahydrofolate to 5,10-methenyltetrahydrofolate and then the hydrolysis of 5,10-methenyltetrahydrofolate to 10-formyltetrahydrofolate. The sequence is that of Bifunctional protein FolD from Shewanella sediminis (strain HAW-EB3).